We begin with the raw amino-acid sequence, 4244 residues long: Tenascin-X (4244 aa).

Residues M1–A23 form the signal peptide. A disordered region spans residues S27–S57. Residue N31 is glycosylated (N-linked (GlcNAc...) asparagine). The EGF-like 1; incomplete domain maps to C156–S168. A disordered region spans residues D169–D189. 18 EGF-like domains span residues A183–C213, G214–C244, S245–C275, G276–C306, G307–C337, G338–C368, S369–C399, G400–C430, G431–C461, G462–C492, G493–C523, G524–C554, S555–C585, G586–C616, S617–C647, A648–G679, P684–C714, and A715–G746. 54 disulfides stabilise this stretch: C187–C197, C191–C202, C204–C213, C218–C228, C222–C233, C235–C244, C249–C259, C253–C264, C266–C275, C280–C290, C284–C295, C297–C306, C311–C321, C315–C326, C328–C337, C342–C352, C346–C357, C359–C368, C373–C383, C377–C388, C390–C399, C404–C414, C408–C419, C421–C430, C435–C445, C439–C450, C452–C461, C466–C476, C470–C481, C483–C492, C497–C507, C501–C512, C514–C523, C528–C538, C532–C543, C545–C554, C559–C569, C563–C574, C576–C585, C590–C600, C594–C605, C607–C616, C621–C631, C625–C636, C638–C647, C652–C662, C656–C667, C669–C678, C688–C698, C692–C703, C705–C714, C719–C729, C723–C734, and C736–C745. The disordered stretch occupies residues T926–L956. 10 consecutive Fibronectin type-III domains span residues R959–K1051, R1064–D1153, H1161–R1249, L1263–D1352, L1374–A1468, R1476–S1572, P1574–A1669, P1674–A1764, L1778–T1868, and H1883–E1971. A disordered region spans residues P1340–E1372. A Cell attachment site motif is present at residues R1666–D1668. Residues P1752–R1777 are disordered. Positions V1968–L1990 are disordered. Pro residues predominate over residues E1976–K1987. Fibronectin type-III domains lie at R1989 to A2089, L2097 to E2185, R2196 to P2296, R2305 to P2398, and P2408 to D2502. The segment at A2281–P2304 is disordered. Residues G2495–W2542 form a disordered region. Residues T2506 to A2516 show a composition bias toward low complexity. Fibronectin type-III domains follow at residues P2519 to A2617, P2625 to P2723, P2733 to E2840, P2841 to P2939, P2949 to D3042, R3062 to P3153, L3168 to P3260, R3264 to S3355, R3357 to K3446, H3451 to P3544, P3553 to A3647, R3657 to P3754, S3758 to G3847, P3848 to E3934, and A3935 to P4025. Residues V2530 to W2542 are compositionally biased toward polar residues. Disordered stretches follow at residues P2824–L2847 and E2933–S2969. Residues P2937 to A2946 are compositionally biased toward low complexity. Over residues V2960 to S2969 the composition is skewed to polar residues. Disordered regions lie at residues A3536 to L3559 and L3636 to S3662. Residues N3855, N3908, and N3920 are each glycosylated (N-linked (GlcNAc...) asparagine). One can recognise a Fibrinogen C-terminal domain in the interval G4021 to N4236. Cysteines 4030 and 4060 form a disulfide. An N-linked (GlcNAc...) asparagine glycan is attached at N4095. The cysteines at positions 4182 and 4195 are disulfide-linked.

The protein belongs to the tenascin family. In terms of assembly, homotrimer. Interacts with type I, III and V collagens and tropoelastin via its 29th fibronectin type-III domain. Highly expressed in fetal adrenal, in fetal testis, fetal smooth, striated and cardiac muscle. Isoform XB-short is only expressed in the adrenal gland.

It is found in the secreted. The protein localises to the extracellular space. It localises to the extracellular matrix. Its function is as follows. Appears to mediate interactions between cells and the extracellular matrix. Substrate-adhesion molecule that appears to inhibit cell migration. Accelerates collagen fibril formation. May play a role in supporting the growth of epithelial tumors. This chain is Tenascin-X, found in Homo sapiens (Human).